A 436-amino-acid chain; its full sequence is tRNA-2-methylthio-N(6)-dimethylallyladenosine synthase (436 aa).

The region spanning 5–121 (RKLFIKTYGC…LPDMLERTEG (117 aa)) is the MTTase N-terminal domain. [4Fe-4S] cluster is bound by residues Cys-14, Cys-50, Cys-84, Cys-158, Cys-162, and Cys-165. In terms of domain architecture, Radical SAM core spans 144–374 (ATRGPAAFLT…TEQQRAAQMA (231 aa)). A TRAM domain is found at 373-435 (MAMVGREVGV…PNSLAGERLG (63 aa)).

It belongs to the methylthiotransferase family. MiaB subfamily. As to quaternary structure, monomer. The cofactor is [4Fe-4S] cluster.

The protein localises to the cytoplasm. It catalyses the reaction N(6)-dimethylallyladenosine(37) in tRNA + (sulfur carrier)-SH + AH2 + 2 S-adenosyl-L-methionine = 2-methylsulfanyl-N(6)-dimethylallyladenosine(37) in tRNA + (sulfur carrier)-H + 5'-deoxyadenosine + L-methionine + A + S-adenosyl-L-homocysteine + 2 H(+). Functionally, catalyzes the methylthiolation of N6-(dimethylallyl)adenosine (i(6)A), leading to the formation of 2-methylthio-N6-(dimethylallyl)adenosine (ms(2)i(6)A) at position 37 in tRNAs that read codons beginning with uridine. This Cereibacter sphaeroides (strain ATCC 17023 / DSM 158 / JCM 6121 / CCUG 31486 / LMG 2827 / NBRC 12203 / NCIMB 8253 / ATH 2.4.1.) (Rhodobacter sphaeroides) protein is tRNA-2-methylthio-N(6)-dimethylallyladenosine synthase.